The chain runs to 182 residues: Urease accessory protein UreE (182 aa).

The interval 128–182 is disordered; it reads PRTEPFRPEGGAYGHGRTLGHDHGPAQGHGHDHPHVHVHISHKPDEDETPDADPA. A compositionally biased stretch (basic and acidic residues) spans 146–162; that stretch reads LGHDHGPAQGHGHDHPH. Acidic residues predominate over residues 173-182; it reads EDETPDADPA.

This sequence belongs to the UreE family.

The protein resides in the cytoplasm. In terms of biological role, involved in urease metallocenter assembly. Binds nickel. Probably functions as a nickel donor during metallocenter assembly. The protein is Urease accessory protein UreE of Cereibacter sphaeroides (strain ATCC 17023 / DSM 158 / JCM 6121 / CCUG 31486 / LMG 2827 / NBRC 12203 / NCIMB 8253 / ATH 2.4.1.) (Rhodobacter sphaeroides).